We begin with the raw amino-acid sequence, 971 residues long: Reversion-inducing cysteine-rich protein with Kazal motifs (971 aa).

The first 22 residues, Met1–Ala22, serve as a signal peptide directing secretion. One copy of the Knot 1 repeat lies at Cys37–Cys84. The segment at Cys37–Cys338 is 5 X Knot repeats. 2 N-linked (GlcNAc...) asparagine glycosylation sites follow: Asn39 and Asn86. Knot repeat units lie at residues Cys104–Cys141 and Cys151–Cys197. Residue Asn200 is glycosylated (N-linked (GlcNAc...) asparagine). Knot repeat units follow at residues Cys216 to Cys263 and Cys292 to Cys338. N-linked (GlcNAc...) asparagine glycans are attached at residues Asn297 and Asn352. 3 Kazal-like domains span residues Thr627–Ser673, Thr698–Pro752, and Phe753–Ala789. Cystine bridges form between Cys633–Cys658, Cys635–Cys654, Cys643–Cys671, Cys716–Cys735, Cys724–Cys750, and Cys761–Cys787. The GPI-anchor amidated serine moiety is linked to residue Ser942. A propeptide spans Ala943–Asn971 (removed in mature form).

It belongs to the RECK family. As to quaternary structure, interacts (via knot repeats) with WNT7A (via disordered linker region); the interaction is direct. Interacts (via knot repeats) with WNT7B (via disordered linker region); the interaction is direct. Interacts with ADGRA2; the interaction is direct. Interacts with MMP9. Post-translationally, N-glycosylated. Expressed in various tissues and untransformed cells. It is undetectable in tumor-derived cell lines and oncogenically transformed cells.

The protein localises to the cell membrane. Its function is as follows. Functions together with ADGRA2 to enable brain endothelial cells to selectively respond to Wnt7 signals (WNT7A or WNT7B). Plays a key role in Wnt7-specific responses: required for central nervous system (CNS) angiogenesis and blood-brain barrier regulation. Acts as a Wnt7-specific coactivator of canonical Wnt signaling by decoding Wnt ligands: acts by interacting specifically with the disordered linker region of Wnt7, thereby conferring ligand selectivity for Wnt7. ADGRA2 is then required to deliver RECK-bound Wnt7 to frizzled by assembling a higher-order RECK-ADGRA2-Fzd-LRP5-LRP6 complex. Also acts as a serine protease inhibitor: negatively regulates matrix metalloproteinase-9 (MMP9) by suppressing MMP9 secretion and by direct inhibition of its enzymatic activity. Also inhibits metalloproteinase activity of MMP2 and MMP14 (MT1-MMP). This Homo sapiens (Human) protein is Reversion-inducing cysteine-rich protein with Kazal motifs.